A 148-amino-acid chain; its full sequence is Angiogenin-1 (148 aa).

The N-terminal stretch at 1-23 (MVMVLSPLLLVFILGLGLTPVAP) is a signal peptide. Catalysis depends on histidine 37, which acts as the Proton acceptor. Residue arginine 45 coordinates tRNA. Disulfide bonds link cysteine 50–cysteine 105, cysteine 63–cysteine 116, and cysteine 81–cysteine 131. Residues 55–59 (KNRRL) carry the Nucleolar localization signal motif. Residues cysteine 105 and isoleucine 127 each contribute to the tRNA site. Catalysis depends on histidine 138, which acts as the Proton donor.

It belongs to the pancreatic ribonuclease family. As to quaternary structure, homodimer. Interacts with RNH1; inhibiting ANG ribonuclease activity. In terms of tissue distribution, serum and milk.

Its subcellular location is the secreted. It localises to the nucleus. It is found in the nucleolus. The protein resides in the cytoplasm. The protein localises to the stress granule. In terms of biological role, secreted ribonuclease that can either promote or restrict cell proliferation of target cells, depending on the context. Endocytosed in target cells via its receptor PLXNB2 and translocates to the cytoplasm or nucleus. Under stress conditions, localizes to the cytoplasm and promotes the assembly of stress granules (SGs): specifically cleaves a subset of tRNAs within anticodon loops to produce tRNA-derived stress-induced fragments (tiRNAs), resulting in translation repression and inhibition of cell proliferation. tiRNas also prevent formation of apoptosome, thereby promoting cell survival. Preferentially cleaves RNAs between a pyrimidine and an adenosine residue, suggesting that it cleaves the anticodon loop of tRNA(Ala) (32-UUAGCAU-38) after positions 33 and 36. Cleaves a subset of tRNAs, including tRNA(Ala), tRNA(Glu), tRNA(Gly), tRNA(Lys), tRNA(Val), tRNA(His), tRNA(Asp) and tRNA(Sec). Under growth conditions and in differentiated cells, translocates to the nucleus and stimulates ribosomal RNA (rRNA) transcription, including that containing the initiation site sequences of 45S rRNA, thereby promoting cell growth and proliferation. Angiogenin induces vascularization of normal and malignant tissues via its ability to promote rRNA transcription. The sequence is that of Angiogenin-1 (ANG1) from Bos taurus (Bovine).